Consider the following 232-residue polypeptide: TIR domain-containing adapter molecule 2 (232 aa).

Positions 1–39 (MGVGKSKLDKCPLSWHKKDSVDADQDGHESDSKNSEEAC) are enriched in basic and acidic residues. Residues 1-70 (MGVGKSKLDK…EAKGAGPEEQ (70 aa)) are disordered. Gly2 carries the N-myristoyl glycine lipid modification. The 153-residue stretch at 74 to 226 (EFLKFVILHA…SIWKETRSVS (153 aa)) folds into the TIR domain. Tyr164 is subject to Phosphotyrosine.

Homodimer. Interacts with TLR4, TICAM1, IRF3 and IRF7 in response to LPS. Interacts with IL1R1, IL1RAP, IRAK2, IRAK3 and TRAF6. Interacts with protein kinase-inactive mutants of IRAK1 and IRAK4. Isoform 1 interacts with isoform 2; the interaction occurs in late endosomes and disrupts the interaction between isoform 1 and TICAM1. Interacts with MYD88; the interaction decreases after IL-18 stimulation in a time-dependent manner. Interacts with IL18R1 and IL18RAP. Interacts with TLR2. Interacts with RAB11FIP2. Myristoylated. Required for membrane association which is critical for its ability to initiate efficient signaling. Post-translationally, phosphorylated by PRKCE in response to LPS. Phosphorylation is essential for its function. It is depleted from the membrane upon phosphorylation. Tyrosine phosphorylation is inhibited by phosphatase PTPN4.

The protein localises to the cytoplasm. It is found in the golgi apparatus. It localises to the cell membrane. The protein resides in the early endosome. Its subcellular location is the late endosome. The protein localises to the endoplasmic reticulum. It is found in the cell projection. It localises to the phagocytic cup. Functions as a sorting adapter in different signaling pathways to facilitate downstream signaling leading to type I interferon induction. In TLR4 signaling, physically bridges TLR4 and TICAM1 and functionally transmits signal to TICAM1 in early endosomes after endocytosis of TLR4. In TLR2 signaling, physically bridges TLR2 and MYD88 and is required for the TLR2-dependent movement of MYD88 to endosomes following ligand engagement. Involved in IL-18 signaling and is proposed to function as a sorting adapter for MYD88 in IL-18 signaling during adaptive immune response. Forms a complex with RAB11FIP2 that is recruited to the phagosomes to promote the activation of the actin-regulatory GTPases RAC1 and CDC42 and subsequent phagocytosis of Gram-negative bacteria. The polypeptide is TIR domain-containing adapter molecule 2 (Ticam2) (Mus musculus (Mouse)).